The following is a 59-amino-acid chain: Putative potassium channel toxin Ts23 (59 aa).

The signal sequence occupies residues 1 to 22; sequence MKAFYGILIIFILISMLDLSQQ. 3 cysteine pairs are disulfide-bonded: C29–C50, C35–C55, and C39–C57.

Belongs to the short scorpion toxin superfamily. Potassium channel inhibitor family. Alpha-KTx 04 subfamily. Expressed by the venom gland.

It localises to the secreted. In terms of biological role, potently blocks Kv1.1/KCNA1 (85%), Kv1.2/KCNA2 (91%), Kv1.3/KCNA3 (89%), Kv1.6/KCNA6 (94%), and Shaker (97%). The chain is Putative potassium channel toxin Ts23 from Tityus serrulatus (Brazilian scorpion).